A 423-amino-acid polypeptide reads, in one-letter code: Probable sucrose-phosphatase 3b (423 aa).

This sequence belongs to the sucrose phosphatase family. As to quaternary structure, homodimer. Requires Mg(2+) as cofactor.

The enzyme catalyses sucrose 6(F)-phosphate + H2O = sucrose + phosphate. It functions in the pathway glycan biosynthesis; sucrose biosynthesis; sucrose from D-fructose 6-phosphate and UDP-alpha-D-glucose: step 2/2. Its function is as follows. Catalyzes the final step of sucrose synthesis. The protein is Probable sucrose-phosphatase 3b (SPP3B) of Arabidopsis thaliana (Mouse-ear cress).